Reading from the N-terminus, the 1248-residue chain is Probable serine/threonine-protein kinase DDB_G0278509 (1248 aa).

Disordered regions lie at residues 1–26 (MSKV…NGEY), 40–61 (SVNG…EEDY), 100–125 (QSYK…DHLE), 180–220 (QNNN…TKNN), and 235–338 (SIDS…NNNK). A compositionally biased stretch (polar residues) spans 102–117 (YKLSNSGESMNRSINQ). A compositionally biased stretch (low complexity) spans 181–216 (NNNNNNSNSNSNSNSNSNNNNNNNNNNNNNNNNNNN). LRR repeat units lie at residues 386–407 (SSTE…DEKE), 411–432 (GYKI…AFTN), 435–457 (NLEQ…EFLK), 458–480 (HLTI…GNLS), 481–502 (FLRE…GNLY), 503–524 (NLKK…CVEP), 527–548 (QLQT…TTTT), 572–593 (NLKQ…LRHL), 595–616 (KLHS…VVAS), 619–641 (RLAK…NNLS), 642–663 (SLIE…ICYL), 665–687 (NLKK…GFLT), and 688–708 (KLVD…SFLK). Residues 825–873 (YPFQKLDPIPQSLYSSSNPRSHTESDIQKLKNNDETITTTNSSISTTSS) are disordered. The segment covering 845–858 (SHTESDIQKLKNND) has biased composition (basic and acidic residues). The span at 860-873 (TITTTNSSISTTSS) shows a compositional bias: low complexity. A Protein kinase domain is found at 946–1239 (IQFFNLIGQG…SIYHRLENLM (294 aa)). ATP is bound by residues 952–960 (IGQGGFSKV) and K973. Catalysis depends on D1069, which acts as the Proton acceptor. The interval 1106–1135 (NNTNNTATSSTTTSSANGANSISNNNNNGT) is disordered.

The protein belongs to the protein kinase superfamily. TKL Ser/Thr protein kinase family.

The enzyme catalyses L-seryl-[protein] + ATP = O-phospho-L-seryl-[protein] + ADP + H(+). It catalyses the reaction L-threonyl-[protein] + ATP = O-phospho-L-threonyl-[protein] + ADP + H(+). This Dictyostelium discoideum (Social amoeba) protein is Probable serine/threonine-protein kinase DDB_G0278509.